Reading from the N-terminus, the 471-residue chain is Replication factor C large subunit (471 aa).

An ATP-binding site is contributed by 44–51 (GSPGIGKT). The segment covering 422 to 431 (RTDAAVDHSE) has biased composition (basic and acidic residues). The disordered stretch occupies residues 422 to 471 (RTDAAVDHSEGAFAGAVREDNTDEDSAADETTDGDEDTGADSQRGLDEFF). Residues 442 to 460 (NTDEDSAADETTDGDEDTG) are compositionally biased toward acidic residues.

Belongs to the activator 1 small subunits family. RfcL subfamily. In terms of assembly, heteromultimer composed of small subunits (RfcS) and large subunits (RfcL).

Its function is as follows. Part of the RFC clamp loader complex which loads the PCNA sliding clamp onto DNA. This Halobacterium salinarum (strain ATCC 29341 / DSM 671 / R1) protein is Replication factor C large subunit.